The chain runs to 1489 residues: DEAD-box ATP-dependent DNA helicase Fancm (1489 aa).

The region spanning 65-237 (IVQSALFKNT…AVCRNLYISN (173 aa)) is the Helicase ATP-binding domain. 78-85 (LPTGLGKT) contacts ATP. Positions 185–188 (DEAH) match the DEAH box motif. In terms of domain architecture, Helicase C-terminal spans 418 to 584 (KLRQVLVQHF…VVKLSLYEQN (167 aa)). 6 disordered regions span residues 591–647 (KFQP…ESQQ), 980–1000 (VEESQRSTPISIADSSGESNH), 1145–1182 (TETIKNSENKNSHEDGSRTVSPDIFGSDSMSPLKPQGK), 1196–1222 (VLPCPPPNSVGLNSPENRKRTNPSIQE), 1255–1293 (NPTISVPKDEEDSPIARRPSKRKIVISSDEEEEQKPQIA), and 1452–1489 (ERRKQRRLGKVPSAPVNKRRRLQTISTSSDEDDVVLID). Residues 594–610 (PKCEEKHMEPVAEEKPK) show a composition bias toward basic and acidic residues. Over residues 611-625 (PKSAAKTKESRKRKQ) the composition is skewed to basic residues. Residues 985-998 (RSTPISIADSSGES) are compositionally biased toward polar residues. Basic and acidic residues predominate over residues 1149 to 1161 (KNSENKNSHEDGS). Residues 1480–1489 (SDEDDVVLID) show a composition bias toward acidic residues.

The protein belongs to the DEAD box helicase family. DEAH subfamily. FANCM sub-subfamily.

It is found in the nucleus. It carries out the reaction ATP + H2O = ADP + phosphate + H(+). It catalyses the reaction Couples ATP hydrolysis with the unwinding of duplex DNA by translocating in the 3'-5' direction.. Functionally, a ssDNA-dependent ATPase with 3' to 5' helicase activity. Involved in multiple DNA-damage responses, some that require ATPase and helicase activity and some that are independent of these. Involved in DNA interstrand cross-link repair, probably together with Fancl and other Fanconi anemia pathway homologs. Independent of Fancl involved in DNA double strand break repair, including contributing to the synthesis-dependent strand annealing (SDSA) pathway. Probably contributes to SDSA by unwinding short duplex regions in complex D-loop-like DNA structures. This chain is DEAD-box ATP-dependent DNA helicase Fancm, found in Drosophila melanogaster (Fruit fly).